Reading from the N-terminus, the 1034-residue chain is Vacuolar membrane protease (1034 aa).

Residues 1–11 (MAVKNPFGFTT) are Cytoplasmic-facing. A helical membrane pass occupies residues 12-32 (GPVTFWLIVVYAAFLIPLVWI). The Vacuolar segment spans residues 33–418 (HESVPAVPSS…GFAILELRGL (386 aa)). N-linked (GlcNAc...) asparagine glycosylation is found at N51 and N141. Residues H200 and D212 each contribute to the Zn(2+) site. The Proton acceptor role is filled by E246. The Zn(2+) site is built by E247, E272, and H345. A helical transmembrane segment spans residues 419–439 (FAWTLTLLIVSPLVLALVTYI). Residues 440 to 470 (LSRKDKYYFFSRKVTADEDDEPVSVGGWKGF) lie on the Cytoplasmic side of the membrane. A helical transmembrane segment spans residues 471–491 (FRFPFALVLSASITVLSAFLI). The Vacuolar segment spans residues 492–497 (RRVNPH). The chain crosses the membrane as a helical span at residues 498–518 (IIYSSPYAVWAMTLSLFFLVF). Residues 519-536 (WTIAKGASVVRPSALQRG) lie on the Cytoplasmic side of the membrane. The chain crosses the membrane as a helical span at residues 537–557 (YAHIWLFVISWVILVAVTAAA). Residues 558 to 567 (DRFKIASGYP) are Vacuolar-facing. Residues 568–588 (FAFFHSAVFVSALISLCDLFA) form a helical membrane-spanning segment. The Cytoplasmic segment spans residues 589 to 703 (LPSKQEFARN…NLPSWTWFFQ (115 aa)). A disordered region spans residues 623 to 653 (HSHVEDDVAEEPTETTPLRSGENGNGNNGTI). A helical membrane pass occupies residues 704–724 (LLLLAPITITVFLQIALFIVS). Topologically, residues 725–736 (AIHSAAADGNDP) are vacuolar. A helical membrane pass occupies residues 737–757 (ILVYAAIAAFSIIILLPATPF). Over 758–762 (IHRAS) the chain is Cytoplasmic. Residues 763–783 (FYLPLFLLLVFFVTLIYNLVA) form a helical membrane-spanning segment. Topologically, residues 784-1034 (FPFSAENRLK…LVEGRKKFRA (251 aa)) are vacuolar. 3 N-linked (GlcNAc...) asparagine glycosylation sites follow: N805, N866, and N879.

It belongs to the peptidase M28 family. Requires Zn(2+) as cofactor.

The protein resides in the vacuole membrane. Functionally, may be involved in vacuolar sorting and osmoregulation. This chain is Vacuolar membrane protease, found in Colletotrichum graminicola (strain M1.001 / M2 / FGSC 10212) (Maize anthracnose fungus).